Consider the following 145-residue polypeptide: tRNA-specific adenosine deaminase (145 aa).

One can recognise a CMP/dCMP-type deaminase domain in the interval Met1–Ala116. His48 is a Zn(2+) binding site. Glu50 functions as the Proton donor in the catalytic mechanism. 2 residues coordinate Zn(2+): Cys78 and Cys81.

It belongs to the cytidine and deoxycytidylate deaminase family. In terms of assembly, homodimer. Zn(2+) serves as cofactor.

It catalyses the reaction adenosine(34) in tRNA + H2O + H(+) = inosine(34) in tRNA + NH4(+). Functionally, catalyzes the deamination of adenosine to inosine at the wobble position 34 of tRNA(Arg2). This is tRNA-specific adenosine deaminase from Rickettsia bellii (strain RML369-C).